A 993-amino-acid chain; its full sequence is Signal peptide, CUB and EGF-like domain-containing protein 3 (993 aa).

Positions 1–20 are cleaved as a signal peptide; sequence MGSGRVPGLCLLVLLVHARA. Residues 29-69 enclose the EGF-like 1; calcium-binding domain; sequence DVDECVEGTDNCHIDAICQNTPRSYKCICKSGYTGDGKHCK. Cystine bridges form between Cys33/Cys46, Cys40/Cys55, Cys57/Cys68, Cys74/Cys86, Cys82/Cys95, Cys97/Cys110, Cys116/Cys127, Cys123/Cys136, Cys161/Cys172, Cys168/Cys182, Cys184/Cys197, Cys201/Cys212, Cys208/Cys221, Cys223/Cys236, Cys240/Cys251, Cys247/Cys260, Cys262/Cys275, Cys281/Cys292, Cys288/Cys301, Cys303/Cys316, Cys322/Cys332, Cys328/Cys341, Cys343/Cys355, Cys361/Cys372, Cys368/Cys381, and Cys383/Cys397. Positions 70 to 111 constitute an EGF-like 2; calcium-binding domain; the sequence is DVDECEREDNAGCVHDCVNIPGNYRCTCYDGFHLAHDGHNCL. An EGF-like 3; calcium-binding domain is found at 112–148; that stretch reads DVDECAEGNGGCQQSCVNMMGSYECHCREGFFLSDNQ. 3 consecutive EGF-like domains span residues 157–198, 199–237, and 238–276; these read EGMN…RDCK, LTCNYGNGGCQHTCDDTEQGPRCGCHIKFVLHTDGKTCI, and ETCAVNNGGCDSKCHDAATGVHCTCPVGFMLQPDRKTCK. The EGF-like 7; calcium-binding domain occupies 277-317; sequence DIDECRLNNGGCDHICRNTVGSFECSCKKGYKLLINERNCQ. One can recognise an EGF-like 8; calcium-binding domain in the interval 318–356; it reads DIDECSFDRTCDHICVNTPGSFQCLCHRGYLLYGITHCG. Residues 357 to 398 enclose the EGF-like 9; calcium-binding domain; that stretch reads DVDECSINRGGCRFGCINTPGSYQCTCPAGQGRLHWNGKDCT. Asn417, Asn464, Asn685, Asn756, and Asn785 each carry an N-linked (GlcNAc...) asparagine glycan. Cystine bridges form between Cys804–Cys830 and Cys857–Cys878. Residues 804-916 enclose the CUB domain; the sequence is CGGELGEFTG…RGFQIPYVTY (113 aa).

In terms of assembly, forms homooligomers. Forms heterooligomers with SCUBE1 and SCUBE2. Interacts with TGFBR2 through the CUB domain; this interaction does not affect TGFB1-binding to TGFBR2. Interacts with BMP2, BMP4 and BMP7; the interaction is mediated by the CUB domain. Interacts with BMPR1A, BMPR1B and BMPR2; the interaction with BMPR1A and BMPR1B is BMP2- and BMP4-dependent. Post-translationally, N-glycosylated. In terms of processing, proteolytic cleavage produces a CUB-containing C-terminal fragment that retains the ability to bind to TGFBR2. This reaction is catalyzed in vitro by MMP2 and, to a lesser extent, by MMP9. Highly expressed in osteoblasts. In normal lung, mainly expressed in bronchial epithelial cells. Tends to be up-regulated in lung cancer cells.

It localises to the secreted. Its subcellular location is the cell surface. Its function is as follows. Is a positive regulator of the BMP signaling pathway, required for proper chondrogenesis, osteogenesis and skeletal development. It acts as a coreceptor for BMP ligands, particularly BMP2 and BMP4, facilitating their interactions with BMP type I receptors. It is required for ligand-induced recruitment of BMP receptors to lipid rafts. Binds to TGFBR2 and activates TGFB signaling. In lung cancer cells, could serve as an endogenous autocrine and paracrine ligand of TGFBR2, which could regulate TGFBR2 signaling and hence modulate epithelial-mesenchymal transition and cancer progression. In Homo sapiens (Human), this protein is Signal peptide, CUB and EGF-like domain-containing protein 3.